Consider the following 523-residue polypeptide: Translation initiation factor eIF2B subunit delta (523 aa).

The segment at 1-147 is disordered; it reads MAAVAVAVRE…PSGVKRLPEY (147 aa). N-acetylalanine is present on Ala2. Ser12 carries the post-translational modification Phosphoserine. The segment covering 30–40 has biased composition (basic and acidic residues); sequence EMTKEEKLQLR. Basic residues predominate over residues 41 to 51; the sequence is KEKKQQKKKRK. At Thr86 the chain carries Phosphothreonine. Basic and acidic residues predominate over residues 87–121; the sequence is PREKVPAGRSKAELRAERRAKQEAERALKQARKGE. Phosphoserine is present on Ser130. The interval 170–179 is may bind the chemical integrated stress response (ISR) inhibitor ISRIB; sequence RKDYGSKVSL.

This sequence belongs to the eIF-2B alpha/beta/delta subunits family. As to quaternary structure, component of the translation initiation factor 2B (eIF2B) complex which is a heterodecamer of two sets of five different subunits: alpha, beta, gamma, delta and epsilon. Subunits alpha, beta and delta comprise a regulatory subcomplex and subunits epsilon and gamma comprise a catalytic subcomplex. Within the complex, the hexameric regulatory complex resides at the center, with the two heterodimeric catalytic subcomplexes bound on opposite sides.

The protein localises to the cytoplasm. It is found in the cytosol. With respect to regulation, activated by the chemical integrated stress response (ISR) inhibitor ISRIB which stimulates guanine nucleotide exchange factor activity for both phosphorylated and unphosphorylated eIF2. Acts as a component of the translation initiation factor 2B (eIF2B) complex, which catalyzes the exchange of GDP for GTP on eukaryotic initiation factor 2 (eIF2) gamma subunit. Its guanine nucleotide exchange factor activity is repressed when bound to eIF2 complex phosphorylated on the alpha subunit, thereby limiting the amount of methionyl-initiator methionine tRNA available to the ribosome and consequently global translation is repressed. This is Translation initiation factor eIF2B subunit delta (EIF2B4) from Homo sapiens (Human).